A 423-amino-acid polypeptide reads, in one-letter code: UDP-N-acetylglucosamine 1-carboxyvinyltransferase (423 aa).

Residue 22-23 coordinates phosphoenolpyruvate; the sequence is KN. A UDP-N-acetyl-alpha-D-glucosamine-binding site is contributed by Arg93. Catalysis depends on Cys117, which acts as the Proton donor. A 2-(S-cysteinyl)pyruvic acid O-phosphothioketal modification is found at Cys117. UDP-N-acetyl-alpha-D-glucosamine is bound by residues 122-126, Asp308, and Ile330; that span reads RPVDL.

Belongs to the EPSP synthase family. MurA subfamily.

It localises to the cytoplasm. It catalyses the reaction phosphoenolpyruvate + UDP-N-acetyl-alpha-D-glucosamine = UDP-N-acetyl-3-O-(1-carboxyvinyl)-alpha-D-glucosamine + phosphate. It functions in the pathway cell wall biogenesis; peptidoglycan biosynthesis. Cell wall formation. Adds enolpyruvyl to UDP-N-acetylglucosamine. In Maricaulis maris (strain MCS10) (Caulobacter maris), this protein is UDP-N-acetylglucosamine 1-carboxyvinyltransferase.